A 421-amino-acid chain; its full sequence is MAPQMEKVSEELILPSSPTPQSLKCYKISHLDQLLLTCHIPFILFYPNPLDSNLDPAQTSQHLKQSLSKVLTHFYPLAGRINVNSSVDCNDSGVPFVEARVQAQLSQAIQNVVELEKLDQYLPSAAYPGGKIEVNEDVPLAVKISFFECGGTAIGVNLSHKIADVLSLATFLNAWTATCRGETEIVLPNFDLAARHFPPVDNTPSPELVPDENVVMKRFVFDKEKIGALRAQASSASEEKNFSRVQLVVAYIWKHVIDVTRAKYGAKNKFVVVQAVNLRSRMNPPLPHYAMGNIATLLFAAVDAEWDKDFPDLIGPLRTSLEKTEDDHNHELLKGMTCLYELEPQELLSFTSWCRLGFYDLDFGWGKPLSACTTTFPKRNAALLMDTRSGDGVEAWLPMAEDEMAMLPVELLSLVDSDFSK.

Active-site proton acceptor residues include His-160 and Asp-362.

The protein belongs to the plant acyltransferase family. As to quaternary structure, monomer. As to expression, mainly expressed in roots and, to a lower level, in leaves.

It carries out the reaction 16-epivellosimine + acetyl-CoA = vinorine + CoA. It functions in the pathway alkaloid biosynthesis; ajmaline biosynthesis. Complete inhibition by 4-(2-aminoethyl)-benzenesulfonyl fluoride (AEBSF), N-tosyl-L-phenylalanine chloromethylketone (TPCK), Hg(2+) and diethyl-pyrocarbonate (DEPC). 50% inhibition by N-(N-(L-3-trans-carboxirane-2-carbonyl)-L-leucyl)-agmanitine (E-64), N-alpha-p-tosyl-L-lysine chloromethylketone (TLCK) and phenylmethylsulfonyl fluoride (PMSF). Its function is as follows. Acetyltransferase involved in the biosynthesis of ajmaline-type monoterpenoid indole alkaloids (MIAs) natural products, important plant-derived pharmaceuticals used in the therapy of heart disorders. Catalyzes the conversion of 16-epivellosimine to vinorine, precursor of vomilenine, an intermediate chemical in the biosynthesis of ajmaline. Acts on gardneral, but not on polyneuridine aldehyde or N-methylgardneral. In Rauvolfia serpentina (Serpentine wood), this protein is Vinorine synthase.